Consider the following 426-residue polypeptide: PHD finger-containing protein 6 (426 aa).

The segment at Arg-9–Arg-59 adopts a PHD-type zinc-finger fold. Cys-12, Cys-15, Cys-27, Cys-30, His-36, Cys-39, Cys-53, and Cys-56 together coordinate Zn(2+). 2 disordered regions span residues Thr-122 to Phe-144 and Arg-185 to Ala-205.

In terms of assembly, interacts directly with AIPP3/BDT1.

In terms of biological role, together with AIPP3/BDT1, cooperates to form a BAH-PHD bivalent histone reader complex able to read histone H3 lysine 27 trimethylation (H3K27me3) histone marks in order to regulate transcription, especially to prevent early flowering; promotes AIPP3/BDT1 binding to H3K27me3. The protein is PHD finger-containing protein 6 of Arabidopsis thaliana (Mouse-ear cress).